Reading from the N-terminus, the 259-residue chain is UPF0246 protein VF_2109 (259 aa).

Belongs to the UPF0246 family.

This is UPF0246 protein VF_2109 from Aliivibrio fischeri (strain ATCC 700601 / ES114) (Vibrio fischeri).